We begin with the raw amino-acid sequence, 104 residues long: Phosphoribosyl-ATP pyrophosphatase (104 aa).

The protein belongs to the PRA-PH family.

The protein resides in the cytoplasm. The catalysed reaction is 1-(5-phospho-beta-D-ribosyl)-ATP + H2O = 1-(5-phospho-beta-D-ribosyl)-5'-AMP + diphosphate + H(+). It functions in the pathway amino-acid biosynthesis; L-histidine biosynthesis; L-histidine from 5-phospho-alpha-D-ribose 1-diphosphate: step 2/9. In Nitrosococcus oceani (strain ATCC 19707 / BCRC 17464 / JCM 30415 / NCIMB 11848 / C-107), this protein is Phosphoribosyl-ATP pyrophosphatase.